The chain runs to 386 residues: O-phospho-L-seryl-tRNA:Cys-tRNA synthase (386 aa).

Pyridoxal 5'-phosphate-binding positions include 89–90 (AR), N196, and 219–221 (SGH). K222 is subject to N6-(pyridoxal phosphate)lysine.

Belongs to the SepCysS family. Homodimer. Interacts with SepRS. It depends on pyridoxal 5'-phosphate as a cofactor.

It carries out the reaction O-phospho-L-seryl-tRNA(Cys) + hydrogen sulfide + H(+) = L-cysteinyl-tRNA(Cys) + phosphate. In terms of biological role, converts O-phospho-L-seryl-tRNA(Cys) (Sep-tRNA(Cys)) to L-cysteinyl-tRNA(Cys) (Cys-tRNA(Cys)). The chain is O-phospho-L-seryl-tRNA:Cys-tRNA synthase from Methanosarcina acetivorans (strain ATCC 35395 / DSM 2834 / JCM 12185 / C2A).